We begin with the raw amino-acid sequence, 265 residues long: MNTYKPYSERAKQHSNACARSLLELMERKQTNLSVAVDVTTKKELISIADAIGPYICVLKTHIDIVEDFDADLIQQLQELAKKHDFLFFEDRKFADIGNTVKHQYANGIYKIASWSHITNAHTVPGEGIIKGLAEVGLPLGRGLLLLAEMSSKGALTKGSYTTDSVEMARRNKDFVFGFIAQNKMNQYDDEDFIVMSPGVGLDVKGDGLGQQYRTPREVIVESGADVIIVGRGIYGQPDKLVEQAQRYRQAGWDAYLERLALHNK.

Substrate contacts are provided by residues aspartate 38, 60–62 (KTH), 91–100 (DRKFADIGNT), tyrosine 213, and arginine 232. The active-site Proton donor is the lysine 93.

The protein belongs to the OMP decarboxylase family.

The enzyme catalyses orotidine 5'-phosphate + H(+) = UMP + CO2. It functions in the pathway pyrimidine metabolism; UMP biosynthesis via de novo pathway; UMP from orotate: step 2/2. This is Orotidine 5'-phosphate decarboxylase (pyrG) from Rhizopus oryzae (Mucormycosis agent).